The following is a 67-amino-acid chain: Protein SlyX homolog (67 aa).

The protein belongs to the SlyX family.

This chain is Protein SlyX homolog, found in Thiobacillus denitrificans (strain ATCC 25259 / T1).